We begin with the raw amino-acid sequence, 314 residues long: Acetyl-coenzyme A carboxylase carboxyl transferase subunit alpha (314 aa).

A CoA carboxyltransferase C-terminal domain is found at 38–292 (RLERKSAALL…ANAIDEELDA (255 aa)).

This sequence belongs to the AccA family. Acetyl-CoA carboxylase is a heterohexamer composed of biotin carboxyl carrier protein (AccB), biotin carboxylase (AccC) and two subunits each of ACCase subunit alpha (AccA) and ACCase subunit beta (AccD).

It localises to the cytoplasm. It carries out the reaction N(6)-carboxybiotinyl-L-lysyl-[protein] + acetyl-CoA = N(6)-biotinyl-L-lysyl-[protein] + malonyl-CoA. It participates in lipid metabolism; malonyl-CoA biosynthesis; malonyl-CoA from acetyl-CoA: step 1/1. Component of the acetyl coenzyme A carboxylase (ACC) complex. First, biotin carboxylase catalyzes the carboxylation of biotin on its carrier protein (BCCP) and then the CO(2) group is transferred by the carboxyltransferase to acetyl-CoA to form malonyl-CoA. The protein is Acetyl-coenzyme A carboxylase carboxyl transferase subunit alpha of Erythrobacter litoralis (strain HTCC2594).